The chain runs to 96 residues: Large ribosomal subunit protein bL28 (96 aa).

A disordered region spans residues 1 to 21; the sequence is MSRVCELTGKGPMTGNNVSHA.

This sequence belongs to the bacterial ribosomal protein bL28 family.

This chain is Large ribosomal subunit protein bL28, found in Jannaschia sp. (strain CCS1).